Here is a 1489-residue protein sequence, read N- to C-terminus: Chromosome partition protein MukB (1489 aa).

G34–S41 contacts ATP. Coiled-coil stretches lie at residues L326–Q418, L444–H472, R509–P602, R780–S805, E835–L919, E977–G1116, and V1209–S1266. Positions P666 to R783 are flexible hinge.

The protein belongs to the SMC family. MukB subfamily. As to quaternary structure, homodimerization via its hinge domain. Binds to DNA via its C-terminal region. Interacts, and probably forms a ternary complex, with MukE and MukF via its C-terminal region. The complex formation is stimulated by calcium or magnesium. Interacts with tubulin-related protein FtsZ.

The protein resides in the cytoplasm. It localises to the nucleoid. Functionally, plays a central role in chromosome condensation, segregation and cell cycle progression. Functions as a homodimer, which is essential for chromosome partition. Involved in negative DNA supercoiling in vivo, and by this means organize and compact chromosomes. May achieve or facilitate chromosome segregation by condensation DNA from both sides of a centrally located replisome during cell division. The chain is Chromosome partition protein MukB from Citrobacter koseri (strain ATCC BAA-895 / CDC 4225-83 / SGSC4696).